Here is a 118-residue protein sequence, read N- to C-terminus: Large ribosomal subunit protein bL20 (118 aa).

The protein belongs to the bacterial ribosomal protein bL20 family.

In terms of biological role, binds directly to 23S ribosomal RNA and is necessary for the in vitro assembly process of the 50S ribosomal subunit. It is not involved in the protein synthesizing functions of that subunit. The chain is Large ribosomal subunit protein bL20 from Gluconobacter oxydans (strain 621H) (Gluconobacter suboxydans).